Here is a 306-residue protein sequence, read N- to C-terminus: Galactosylgalactosylxylosylprotein 3-beta-glucuronosyltransferase I (306 aa).

Residues 1 to 11 (MSEVRIRPRQV) are Cytoplasmic-facing. The chain crosses the membrane as a helical; Signal-anchor for type II membrane protein span at residues 12–29 (LILIIVFLVVLMMVHRNG). Over 30–306 (KRTCQGPEYL…GQRSDGGMEV (277 aa)) the chain is Lumenal. Asn90 carries N-linked (GlcNAc...) asparagine glycosylation. Asp163 contacts Mn(2+). Glu252 acts as the Proton acceptor in catalysis.

The protein belongs to the glycosyltransferase 43 family. Mn(2+) serves as cofactor.

It is found in the golgi apparatus membrane. It catalyses the reaction 3-O-(beta-D-galactosyl-(1-&gt;3)-beta-D-galactosyl-(1-&gt;4)-beta-D-xylosyl)-L-seryl-[protein] + UDP-alpha-D-glucuronate = 3-O-(beta-D-GlcA-(1-&gt;3)-beta-D-Gal-(1-&gt;3)-beta-D-Gal-(1-&gt;4)-beta-D-Xyl)-L-seryl-[protein] + UDP + H(+). It participates in protein modification; protein glycosylation. Functionally, involved in the biosynthesis of L2/HNK-1 carbohydrate epitope on both glycolipids and glycoproteins. Shows strict specificity for Gal-beta-1,3-Gal-beta-1,4-Xyl, exhibiting negligible incorporation into other galactoside substrates. The chain is Galactosylgalactosylxylosylprotein 3-beta-glucuronosyltransferase I (GlcAT-I) from Drosophila melanogaster (Fruit fly).